A 67-amino-acid polypeptide reads, in one-letter code: LPS-assembly lipoprotein LptM (67 aa).

The first 19 residues, 1–19, serve as a signal peptide directing secretion; sequence MKNVFKTLAVLLTLFSLTG. Residue cysteine 20 is the site of N-palmitoyl cysteine attachment. Residue cysteine 20 is the site of S-diacylglycerol cysteine attachment. The disordered stretch occupies residues 26 to 67; that stretch reads LYFPPADKNAPPPTKKVDSQTQSTMPDKNDRATGDGPSQVNY.

It belongs to the LptM family. In terms of assembly, interacts with the outer membrane embedded portion of the LPS translocon formed by LptD and LptE (LptDE).

The protein resides in the cell outer membrane. In terms of biological role, component of the lipopolysaccharide (LPS) transport (Lpt) pathway that promotes efficient assembly of the outer membrane LPS translocon (LptDE) by the BAM complex. Facilitates oxidative maturation of LptD by stabilizing a conformation of the LPS translocon in which LptD can efficiently acquire native disulfide bonds, thereby activating the LPS translocon. The protein is LPS-assembly lipoprotein LptM of Salmonella typhi.